A 509-amino-acid polypeptide reads, in one-letter code: Maturase K (509 aa).

Belongs to the intron maturase 2 family. MatK subfamily.

Its subcellular location is the plastid. The protein resides in the chloroplast. Usually encoded in the trnK tRNA gene intron. Probably assists in splicing its own and other chloroplast group II introns. The chain is Maturase K from Galbulimima belgraveana (Northern pigeonberry ash).